The primary structure comprises 148 residues: Aspartate 1-decarboxylase (148 aa).

Residue serine 25 is the Schiff-base intermediate with substrate; via pyruvic acid of the active site. Serine 25 carries the post-translational modification Pyruvic acid (Ser). Residue threonine 57 coordinates substrate. Tyrosine 58 functions as the Proton donor in the catalytic mechanism. 73-75 (GAA) provides a ligand contact to substrate.

It belongs to the PanD family. In terms of assembly, heterooctamer of four alpha and four beta subunits. It depends on pyruvate as a cofactor. Is synthesized initially as an inactive proenzyme, which is activated by self-cleavage at a specific serine bond to produce a beta-subunit with a hydroxyl group at its C-terminus and an alpha-subunit with a pyruvoyl group at its N-terminus.

It is found in the cytoplasm. It carries out the reaction L-aspartate + H(+) = beta-alanine + CO2. The protein operates within cofactor biosynthesis; (R)-pantothenate biosynthesis; beta-alanine from L-aspartate: step 1/1. Catalyzes the pyruvoyl-dependent decarboxylation of aspartate to produce beta-alanine. This chain is Aspartate 1-decarboxylase, found in Rhodococcus jostii (strain RHA1).